The primary structure comprises 284 residues: GPN-loop GTPase 3 (284 aa).

Position 13–18 (13–18 (GSGKST)) interacts with GTP. The Gly-Pro-Asn (GPN)-loop; involved in dimer interface motif lies at 72–74 (GPN). 174–177 (TKMD) contacts GTP. Residues 262 to 284 (EPREHEEESSSMFDEYFQERQNE) form a disordered region.

This sequence belongs to the GPN-loop GTPase family. In terms of assembly, heterodimer with GPN1. Binds to RNA polymerase II (RNAPII). Interacts directly with subunits RPB4 and RPB7 and the CTD of RPB1.

Functionally, small GTPase required for proper localization of RNA polymerase II (RNAPII). May act at an RNAP assembly step prior to nuclear import. The protein is GPN-loop GTPase 3 of Mus musculus (Mouse).